Here is a 710-residue protein sequence, read N- to C-terminus: MDFGDEPEGSDSQRRRKRYHRHTPRQIQQLEAMFKECPHPDENQRAQLSRELGLEPRQIKFWFQNRRTQMKAQHERADNCFLRAENDKIRCENIAIREALKNVICPTCGGPPVGEDYFDEQKLRMENARLKEELDRVSNLTSKYLGRPFTQLPPATPPMTVSSLDLSVGGMGGPSLDLDLLSGGSSGIPFQLPAPVSDMERPMMAEMATRAMDELIRLAQAGDHIWSKSPGGGVSGGDARETLNVDTYDSIFSKPGGSYRAPSINVEGSRESGLVLMSAVALADVFMDTNKWMEFFPSIVSKAHTIDVLVNGMGGRSESLILMYEELHIMTPAVPTREVNFVRYCRQIEQGLWAIADVSVDLQRDAHFGAPPPRSRRLPSGCLIADMANGYSKVTWVEHMEVEEKSPINVLYRDLVLSGAAFGAHRWLAALQRACERYASLVALGVPHHIAGVTPEGKRSMMKLSQRMVNSFCSSLGASQMHQWTTLSGSNEVSVRVTMHRSTDPGQPNGVVLSAATSIWLPVPCDHVFAFVRDENTRSQWDVLSHGNQVQEVSRIPNGSNPGNCISLLRGLNASQNSMLILQESCTDASGSLVVYSPIDIPAANVVMSGEDPSSIPLLPSGFTILPDGRPGSAAGASTSSAGPLAAARGGGGGGAGGGSVVTVAFQILVSSLPSSKLNAESVATVNGLITTTVEQIKAALNCSAHGHHP.

The interval 1–23 (MDFGDEPEGSDSQRRRKRYHRHT) is disordered. Residues 14 to 23 (RRRKRYHRHT) show a composition bias toward basic residues. Residues 15 to 74 (RRKRYHRHTPRQIQQLEAMFKECPHPDENQRAQLSRELGLEPRQIKFWFQNRRTQMKAQH) constitute a DNA-binding region (homeobox). A coiled-coil region spans residues 82–144 (LRAENDKIRC…DRVSNLTSKY (63 aa)). In terms of domain architecture, START spans 197 to 440 (SDMERPMMAE…LQRACERYAS (244 aa)). A compositionally biased stretch (low complexity) spans 630-648 (RPGSAAGASTSSAGPLAAA). The segment at 630-650 (RPGSAAGASTSSAGPLAAARG) is disordered.

Belongs to the HD-ZIP homeobox family. Class IV subfamily.

It localises to the nucleus. Its function is as follows. Probable transcription factor. In Oryza sativa subsp. japonica (Rice), this protein is Homeobox-leucine zipper protein ROC8 (ROC8).